Reading from the N-terminus, the 122-residue chain is Atrial gland peptide B (122 aa).

The N-terminal stretch at 1–21 (MKANTMFIILCLTLSTLCVSS) is a signal peptide. The propeptide occupies 22-34 (QFTSVLGKIFVTN). An Isoleucine amide modification is found at isoleucine 69. The propeptide occupies 73–122 (AAGGMEQSEGQNPETKSHSWRERSVLTPSLLSLGESLESGISKRISINQD). A disordered region spans residues 74–95 (AGGMEQSEGQNPETKSHSWRER).

Belongs to the molluscan ELH family.

The protein resides in the secreted. In terms of biological role, the atrial gland peptide A and peptide B precursors are the source of the 2 peptides that, upon release from this reproductive system gland, initiate the egg-laying process by exciting the bag cell neurons. These neurons, clustered in neural connectives near the abdominal ganglion, in turn release other peptides that act directly on the ganglion and also, via the circulating hemolymph, on many other organs to control the physiological processes of egg-laying. One of these other peptides is the egg-laying hormone. This is Atrial gland peptide B from Aplysia californica (California sea hare).